Reading from the N-terminus, the 347-residue chain is GMP reductase (347 aa).

Residue 108-131 (ADFEKTKQILDLNPALNFVCIDVA) participates in NADP(+) binding. The K(+) site is built by Gly-181 and Gly-183. Cys-186 (thioimidate intermediate) is an active-site residue. NADP(+) is bound at residue 216-239 (IVSDGGCTTPGDVAKAFGGGADFV).

It belongs to the IMPDH/GMPR family. GuaC type 1 subfamily. As to quaternary structure, homotetramer.

It catalyses the reaction IMP + NH4(+) + NADP(+) = GMP + NADPH + 2 H(+). Functionally, catalyzes the irreversible NADPH-dependent deamination of GMP to IMP. It functions in the conversion of nucleobase, nucleoside and nucleotide derivatives of G to A nucleotides, and in maintaining the intracellular balance of A and G nucleotides. This chain is GMP reductase, found in Escherichia coli O127:H6 (strain E2348/69 / EPEC).